The sequence spans 390 residues: Phosphopentomutase (390 aa).

Asp11, Asp283, His288, Asp324, His325, and His336 together coordinate Mn(2+).

It belongs to the phosphopentomutase family. It depends on Mn(2+) as a cofactor.

The protein localises to the cytoplasm. The enzyme catalyses 2-deoxy-alpha-D-ribose 1-phosphate = 2-deoxy-D-ribose 5-phosphate. The catalysed reaction is alpha-D-ribose 1-phosphate = D-ribose 5-phosphate. The protein operates within carbohydrate degradation; 2-deoxy-D-ribose 1-phosphate degradation; D-glyceraldehyde 3-phosphate and acetaldehyde from 2-deoxy-alpha-D-ribose 1-phosphate: step 1/2. In terms of biological role, isomerase that catalyzes the conversion of deoxy-ribose 1-phosphate (dRib-1-P) and ribose 1-phosphate (Rib-1-P) to deoxy-ribose 5-phosphate (dRib-5-P) and ribose 5-phosphate (Rib-5-P), respectively. The polypeptide is Phosphopentomutase (Alkaliphilus oremlandii (strain OhILAs) (Clostridium oremlandii (strain OhILAs))).